Here is a 183-residue protein sequence, read N- to C-terminus: Calcineurin subunit B type 2 (183 aa).

G2 carries the N-myristoyl glycine lipid modification. 4 consecutive EF-hand domains span residues 25–60, 64–92, 94–129, and 135–170; these read REIK…SMNP, RIIS…FHPK, DKAD…MVGS, and QISS…SGCN. The Ca(2+) site is built by D107, N109, D111, and E118.

The protein belongs to the calcineurin regulatory subunit family. In terms of assembly, calcineurin is composed of a catalytic subunit (A) and a regulatory subunit (B).

In terms of biological role, regulatory subunit of calcineurin, a calcium-dependent, calmodulin stimulated protein phosphatase. Confers calcium sensitivity. This chain is Calcineurin subunit B type 2 (cnbB), found in Dictyostelium discoideum (Social amoeba).